Consider the following 513-residue polypeptide: Maturase K (513 aa).

Belongs to the intron maturase 2 family. MatK subfamily.

The protein localises to the plastid. It localises to the chloroplast. Functionally, usually encoded in the trnK tRNA gene intron. Probably assists in splicing its own and other chloroplast group II introns. The sequence is that of Maturase K from Sporobolus michauxianus (Prairie cordgrass).